A 330-amino-acid polypeptide reads, in one-letter code: MAYHTPFAAQPPVASSGLPLTLISLDDWALVTLTGADRVKYLQGQVTADIDALSADQHVLCAHCDAKGKMWSNLRLFYRGEGLAFIERRSLLDNQLSELKKYAVFSKVVIEPQPDAVLIGVAGSQAKTALAEIFTELPSAEHPVTQMGNSTLLHFSLPAERFLLVTDTEQAQQLVEKLAGRAQFNDSKQWLALDIEAGFPIIDAANSAQFIPQATNIQALNGISFTKGCYTGQEMVARAKYRGANKRALYWLAGNASRVPAAGEDLEWQLGENWRRTGTVLSAIQLNDGTVWVQAVLNNDLAADSVLRVRDDALGTLAIQPLPYSLAEDK.

2 residues coordinate folate: tryptophan 28 and tryptophan 190.

Belongs to the tRNA-modifying YgfZ family.

It localises to the cytoplasm. Its function is as follows. Folate-binding protein involved in regulating the level of ATP-DnaA and in the modification of some tRNAs. It is probably a key factor in regulatory networks that act via tRNA modification, such as initiation of chromosomal replication. This is tRNA-modifying protein YgfZ from Yersinia pestis bv. Antiqua (strain Antiqua).